Reading from the N-terminus, the 453-residue chain is UDP-glycosyltransferase 76E1 (453 aa).

Residues Ser-272, 331–333, 348–356, and 370–373 contribute to the UDP-alpha-D-glucose site; these read APQ, HCGWNSTLE, and TGDQ.

The protein belongs to the UDP-glycosyltransferase family.

Possesses low quercetin 3-O-glucosyltransferase and 7-O-glucosyltransferase activities in vitro. The chain is UDP-glycosyltransferase 76E1 (UGT76E1) from Arabidopsis thaliana (Mouse-ear cress).